Reading from the N-terminus, the 528-residue chain is Sodium-dependent lysophosphatidylcholine symporter 1 (528 aa).

Residues 1–37 (MAGGGGAERVRVGAAAAGLLPPSCRQPRRRESRERLS) are Cytoplasmic-facing. A helical membrane pass occupies residues 38–66 (VCSKLCYAVGGAPYQTTGCALGFFLQIYL). Topologically, residues 67 to 73 (LDVAQLD) are extracellular. The helical transmembrane segment at 74-99 (PFYASIILFVGRAWDAITDPMVGFFI) threads the bilayer. The Cytoplasmic portion of the chain corresponds to 100–109 (SKTPWTRFGR). Residues 110-129 (LMPWIIFSTPFAVISYFLIW) traverse the membrane as a helical segment. Topologically, residues 130-138 (FVPDISTGQ) are extracellular. Residues 139–161 (VMWYLIFYCIFQTLVTCFHVPYS) traverse the membrane as a helical segment. Residues 162–176 (ALTMFISREQSERDS) are Cytoplasmic-facing. The helical transmembrane segment at 177–199 (ATAYRMTVEVLGTVLGTAIQGQI) threads the bilayer. The Extracellular segment spans residues 200–241 (VGKAVTPCIENPPFLSETNFSVAIRNVNMTHYTGSLADTRNA). A disulfide bond links Cys-207 and Cys-460. 2 N-linked (GlcNAc...) asparagine glycosylation sites follow: Asn-218 and Asn-227. A helical membrane pass occupies residues 242 to 263 (YMVAAGVIGGLYILCAVILSVG). Topologically, residues 264–295 (VREKRESSELQSDEPVSFFRGLKLVMNHGAYI) are cytoplasmic. A helical transmembrane segment spans residues 296 to 319 (KLITGFLFTSLAFMLLEGNFALFC). Over 320-328 (TYTLGFRNE) the chain is Extracellular. The chain crosses the membrane as a helical span at residues 329–351 (FQNILLAIMLSATLTIPFWQWFL). At 352–355 (TRFG) the chain is on the cytoplasmic side. Residues 356–376 (KKTAVYVGISSAVPFLITVVV) form a helical membrane-spanning segment. At 377–381 (LDSNL) the chain is on the extracellular side. The helical transmembrane segment at 382-404 (VVTYIVAVAAGISVAAAFLLPWS) threads the bilayer. The Cytoplasmic segment spans residues 405 to 427 (MLPDVIDDFKLQHPESRGHEAIF). Residues 428–450 (FSFYVFFTKFTSGVSLGISTLSL) traverse the membrane as a helical segment. Over 451-467 (DFAGYQTRGCSQPSEVN) the chain is Extracellular. The helical transmembrane segment at 468-490 (ITLKLLVSAVPVGLILLGLLLFK) threads the bilayer. Residues 491-528 (LYPIDEEKRRENKKALQDLREESNSSSESDSTELANIV) lie on the Cytoplasmic side of the membrane. Positions 503-513 (KKALQDLREES) are enriched in basic and acidic residues. Residues 503-528 (KKALQDLREESNSSSESDSTELANIV) form a disordered region. The segment covering 514-528 (NSSSESDSTELANIV) has biased composition (low complexity).

Belongs to the major facilitator superfamily.

The protein localises to the cell membrane. It localises to the endoplasmic reticulum membrane. It carries out the reaction a 1-acyl-sn-glycero-3-phosphocholine(in) + Na(+)(in) = a 1-acyl-sn-glycero-3-phosphocholine(out) + Na(+)(out). The catalysed reaction is 1-(4Z,7Z,10Z,13Z,16Z,19Z-docosahexaenoyl)-sn-glycero-3-phosphocholine(in) + Na(+)(in) = 1-(4Z,7Z,10Z,13Z,16Z,19Z-docosahexaenoyl)-sn-glycero-3-phosphocholine(out) + Na(+)(out). The enzyme catalyses 1-(9Z-octadecenoyl)-sn-glycero-3-phosphocholine(in) + Na(+)(in) = 1-(9Z-octadecenoyl)-sn-glycero-3-phosphocholine(out) + Na(+)(out). It catalyses the reaction 1-hexadecanoyl-sn-glycero-3-phosphocholine(in) + Na(+)(in) = 1-hexadecanoyl-sn-glycero-3-phosphocholine(out) + Na(+)(out). It carries out the reaction a 1-acyl-sn-glycero-3-phosphoethanolamine(in) + Na(+)(in) = a 1-acyl-sn-glycero-3-phosphoethanolamine(out) + Na(+)(out). In terms of biological role, sodium-dependent lysophosphatidylcholine (LPC) symporter, which plays an essential role for blood-brain barrier formation and function. Specifically expressed in endothelium of the blood-brain barrier of micro-vessels and transports LPC into the brain. Transport of LPC is essential because it constitutes the major mechanism by which docosahexaenoic acid (DHA), an omega-3 fatty acid that is essential for normal brain growth and cognitive function, enters the brain. Transports LPC carrying long-chain fatty acids such LPC oleate and LPC palmitate with a minimum acyl chain length of 14 carbons. Does not transport docosahexaenoic acid in unesterified fatty acid. The polypeptide is Sodium-dependent lysophosphatidylcholine symporter 1 (Gallus gallus (Chicken)).